The following is a 462-amino-acid chain: MMLLYYILSFILLPVYFIIIFIRLLIGKEDIRRIQERFAIGKQRQNSLLDLQMSVNQEGFKVDTEHKATSYVYIHRNASLMYKLSLERSYAQSLVWIHAASVGEVMTSLTLIHNICKLAPNVRFLITSWTNTSAKILSTKLPKIATHQFLPIDNVIFTRKFLSNWKPDLGIFIESELWPCIINEGAKHCKLLLVNARISNKSFKTWLKRKKFFQLIIKNFSKIIVQSECDLQKFNALGISDAMNLGNIKFANEKLLVNQEKLSKLSLHLDNRRVVVFASTHPEDEEVILPIINNLKEQFVDCYIILIPRHPERVKSILNNCKCHNLLATAKSQNDLPVLSDDIYIVDRFGEMGLFFSVATISFIGGSFKQGGHNILEAAYFSNCIIFGPDMSKNTDIAKGILQNNAAIQIKNGEDLLNTLKSLLNANNALKLKAYRENALKFVEHNQKILDEYLHVIKPFLP.

A helical; Signal-anchor membrane pass occupies residues 2–22 (MLLYYILSFILLPVYFIIIFI). Positions 47 to 90 (SLLDLQMSVNQEGFKVDTEHKATSYVYIHRNASLMYKLSLERSY) constitute an RPE1 insert domain. Glu104 serves as the catalytic Proton acceptor. CMP is bound by residues 308 to 309 (PR), 349 to 351 (FGE), and 374 to 377 (NILE).

Belongs to the glycosyltransferase group 1 family.

Its subcellular location is the cell inner membrane. The catalysed reaction is lipid IVA (E. coli) + CMP-3-deoxy-beta-D-manno-octulosonate = alpha-Kdo-(2-&gt;6)-lipid IVA (E. coli) + CMP + H(+). It participates in bacterial outer membrane biogenesis; LPS core biosynthesis. Functionally, involved in lipopolysaccharide (LPS) biosynthesis. Catalyzes the transfer of 3-deoxy-D-manno-octulosonate (Kdo) residue(s) from CMP-Kdo to lipid IV(A), the tetraacyldisaccharide-1,4'-bisphosphate precursor of lipid A. This Rickettsia typhi (strain ATCC VR-144 / Wilmington) protein is 3-deoxy-D-manno-octulosonic acid transferase (waaA).